Reading from the N-terminus, the 201-residue chain is Dephospho-CoA kinase (201 aa).

In terms of domain architecture, DPCK spans 4 to 201; that stretch reads IIGITGGIAS…LEGGRQDDRD (198 aa). ATP is bound at residue 12–17; sequence ASGKST.

The protein belongs to the CoaE family.

It is found in the cytoplasm. It catalyses the reaction 3'-dephospho-CoA + ATP = ADP + CoA + H(+). Its pathway is cofactor biosynthesis; coenzyme A biosynthesis; CoA from (R)-pantothenate: step 5/5. In terms of biological role, catalyzes the phosphorylation of the 3'-hydroxyl group of dephosphocoenzyme A to form coenzyme A. The protein is Dephospho-CoA kinase of Streptococcus pneumoniae (strain ATCC BAA-255 / R6).